Reading from the N-terminus, the 208-residue chain is ATP phosphoribosyltransferase (208 aa).

Belongs to the ATP phosphoribosyltransferase family. Short subfamily. Heteromultimer composed of HisG and HisZ subunits.

Its subcellular location is the cytoplasm. The enzyme catalyses 1-(5-phospho-beta-D-ribosyl)-ATP + diphosphate = 5-phospho-alpha-D-ribose 1-diphosphate + ATP. It functions in the pathway amino-acid biosynthesis; L-histidine biosynthesis; L-histidine from 5-phospho-alpha-D-ribose 1-diphosphate: step 1/9. Functionally, catalyzes the condensation of ATP and 5-phosphoribose 1-diphosphate to form N'-(5'-phosphoribosyl)-ATP (PR-ATP). Has a crucial role in the pathway because the rate of histidine biosynthesis seems to be controlled primarily by regulation of HisG enzymatic activity. This Hydrogenovibrio crunogenus (strain DSM 25203 / XCL-2) (Thiomicrospira crunogena) protein is ATP phosphoribosyltransferase.